A 396-amino-acid chain; its full sequence is Phosphoglycerate kinase (396 aa).

Substrate-binding positions include 21–23 (DFN), Arg-36, 59–62 (HLGK), Arg-119, and Arg-156. Residues Lys-206, Glu-325, and 352–355 (GGDS) each bind ATP.

Belongs to the phosphoglycerate kinase family. As to quaternary structure, monomer.

It localises to the cytoplasm. The catalysed reaction is (2R)-3-phosphoglycerate + ATP = (2R)-3-phospho-glyceroyl phosphate + ADP. It functions in the pathway carbohydrate degradation; glycolysis; pyruvate from D-glyceraldehyde 3-phosphate: step 2/5. In Staphylococcus saprophyticus subsp. saprophyticus (strain ATCC 15305 / DSM 20229 / NCIMB 8711 / NCTC 7292 / S-41), this protein is Phosphoglycerate kinase.